The primary structure comprises 184 residues: Ras protein let-60 (184 aa).

A GTP-binding site is contributed by 10–17; the sequence is GDGGVGKS. Positions 32–40 match the Effector region motif; sequence YDPTIEDSY. GTP is bound by residues 57-61 and 116-119; these read DTAGQ and NKCD. Cys-181 carries the cysteine methyl ester modification. The S-farnesyl cysteine moiety is linked to residue Cys-181. A propeptide spans 182 to 184 (removed in mature form); the sequence is QIM.

Belongs to the small GTPase superfamily. Ras family. Interacts with soc-2. Interacts (in GTP-bound form) with plc-1 (via Ras-associating domain 1). In terms of tissue distribution, expressed in body wall muscles and in the nervous system including ganglion, nerve ring dorsal and ventral nerve cords, motor neurons and sensory tail neurons.

It is found in the cell membrane. It carries out the reaction GTP + H2O = GDP + phosphate + H(+). Its function is as follows. GTP-binding protein with GTPase activity. The level of let-60 controls the switch between vulval and hypodermal cell fates during C.elegans vulval induction. May stimulate the guanine nucleotide exchange factor (GEF) activity of rap-1. May induce nuclear condensation. The sequence is that of Ras protein let-60 from Caenorhabditis elegans.